The primary structure comprises 4981 residues: Protocadherin Fat 4 (4981 aa).

The N-terminal stretch at 1 to 42 (MNLAANRAPGRRRLPLPSPSLCQLLRVWGLLSLLPGSARVQA) is a signal peptide. Topologically, residues 43-4505 (AEQRQVFQVM…PDEISLPLWA (4463 aa)) are extracellular. Cadherin domains lie at 44-135 (EQRQ…APVF), 136-250 (PDPS…PPVF), 251-353 (GSSH…DPVV), 359-475 (PATS…PPVF), 476-582 (EQQV…KPVF), 584-689 (QPEG…SPVF), 690-793 (YPVQ…PPVF), 794-893 (SQAA…APHF), 894-996 (LQAV…PPVF), 997-1100 (DQIS…RPLF), 1101-1210 (NSTN…APKF), 1211-1315 (LKDF…TPSF), 1316-1420 (PKST…PPSF), 1421-1529 (PPGD…VPMF), 1529-1629 (FISQ…GPVF), 1630-1740 (TQTK…PPVF), 1741-1841 (PTDT…TPRF), 1842-1944 (SRPV…PPVF), 1945-2051 (SMSS…PPMF), 2051-2154 (FLSP…NPVF), 2155-2259 (AQAM…VPVF), 2260-2364 (ELSP…VPTF), 2365-2468 (ANNM…PPRF), 2469-2569 (QHHP…FPKV), 2570-2671 (RAKE…APTF), 2672-2775 (EEDP…APRF), 2775-2874 (FSQI…TPRF), 2875-2985 (SRPS…PPQF), 2986-3091 (LQNK…TPEF), 3092-3196 (SQNH…SPVF), 3197-3300 (VPDE…VPRF), 3301-3406 (VSKL…PPVF), 3407-3512 (SLST…GPVL), and 3511-3622 (VLTV…VEIF). N-linked (GlcNAc...) asparagine glycosylation is found at Asn-84 and Asn-237. 18 N-linked (GlcNAc...) asparagine glycosylation sites follow: Asn-393, Asn-416, Asn-435, Asn-483, Asn-551, Asn-615, Asn-676, Asn-721, Asn-825, Asn-880, Asn-948, Asn-1085, Asn-1101, Asn-1104, Asn-1225, Asn-1296, Asn-1389, and Asn-1514. 4 N-linked (GlcNAc...) asparagine glycosylation sites follow: Asn-1828, Asn-1899, Asn-1967, and Asn-2119. Asn-2387 and Asn-2432 each carry an N-linked (GlcNAc...) asparagine glycan. 7 N-linked (GlcNAc...) asparagine glycosylation sites follow: Asn-2923, Asn-2939, Asn-3038, Asn-3142, Asn-3219, Asn-3394, and Asn-3479. 2 N-linked (GlcNAc...) asparagine glycosylation sites follow: Asn-3708 and Asn-3760. In terms of domain architecture, EGF-like 1 spans 3804–3862 (DHDPCIHGPCQNGGSCLRRLAVGSALKIQESLPVIIVANEPLQPSQCKCVPGYAGSWCE). Disulfide bonds link Cys-3808-Cys-3819, Cys-3813-Cys-3850, Cys-3852-Cys-3861, Cys-3868-Cys-3879, Cys-3873-Cys-3888, Cys-3890-Cys-3899, Cys-3906-Cys-3917, Cys-3911-Cys-3926, Cys-3928-Cys-3937, Cys-3944-Cys-3955, Cys-3949-Cys-3964, and Cys-3966-Cys-3975. Residues 3864–3900 (DIDECLPAPCHNGGTCHNLVGGFSCSCPEGFTGRACE) enclose the EGF-like 2; calcium-binding domain. The EGF-like 3; calcium-binding domain maps to 3902 to 3938 (DINECLPSPCKHGAVCQNFPGGFNCVCKTGYTGKMCE). Positions 3940–3976 (SVNYCECNPCFNGGSCQSGVESYYCHCPFGVFGKHCE) constitute an EGF-like 4 domain. The region spanning 3977–4161 (LNSYGFEELS…LAAQGILDQC (185 aa)) is the Laminin G-like 1 domain. Asn-4019 is a glycosylation site (N-linked (GlcNAc...) asparagine). Intrachain disulfides connect Cys-4135-Cys-4161, Cys-4168-Cys-4179, Cys-4173-Cys-4188, and Cys-4190-Cys-4199. Residues 4164–4200 (LEGTCARNPCQHGGTCVDFWSWQQCQCMEGLTGKYCE) enclose the EGF-like 5 domain. Positions 4219-4399 (YHMSQSEKRE…KTDPSVKIGC (181 aa)) constitute a Laminin G-like 2 domain. N-linked (GlcNAc...) asparagine glycosylation is found at Asn-4269 and Asn-4314. 4 disulfide bridges follow: Cys-4366-Cys-4399, Cys-4431-Cys-4442, Cys-4436-Cys-4452, and Cys-4454-Cys-4463. An EGF-like 6 domain is found at 4427-4464 (PPGDCASHPCQNGGSCEPGLLSGYTCSCPESHTGRTCE). Residues 4506–4526 (VPAIVGSCATALALLVLSLIL) traverse the membrane as a helical segment. At 4527-4981 (CNQCRGKMPK…AKDGEAEQYV (455 aa)) the chain is on the cytoplasmic side. Disordered regions lie at residues 4535–4585 (PKNP…PDII), 4677–4713 (PSSYGQGLRTSSLSHSACPTPNPLSRHSPAPFSKPSA), 4753–4773 (RRSKSPQAMASHGSRPGSRLK), 4796–4911 (RLNT…PAAA), and 4957–4981 (AAGNEEGKSGAAKPAAKDGEAEQYV). Over residues 4677-4701 (PSSYGQGLRTSSLSHSACPTPNPLS) the composition is skewed to polar residues. The segment at 4708 to 4797 (FSKPSAFYRN…GLSIEEVERL (90 aa)) is necessary and sufficient for interaction with MPDZ. Positions 4811-4823 (DHGRSSSEEDCRR) are enriched in basic and acidic residues. Ser-4878 carries the post-translational modification Phosphoserine. Residues 4971–4981 (AAKDGEAEQYV) are compositionally biased toward basic and acidic residues.

Heterophilic interaction with DCHS1; this interaction affects their respective protein levels. Interacts (via cytoplasmic domain) with MPDZ. Forms a complex with PALS1 and MPDZ. Widely expressed.

The protein resides in the membrane. Functionally, cadherins are cell-cell interaction molecules. FAT4 plays a role in the maintenance of planar cell polarity as well as in inhibition of YAP1-mediated neuroprogenitor cell proliferation and differentiation. The chain is Protocadherin Fat 4 (Fat4) from Mus musculus (Mouse).